Reading from the N-terminus, the 1040-residue chain is Putative protein tag-76 (1040 aa).

Over residues 1 to 15 (MSRRNATSFVDNNTL) the composition is skewed to polar residues. Disordered stretches follow at residues 1-61 (MSRR…GSVS) and 322-367 (RTSK…PGAN). A compositionally biased stretch (low complexity) spans 16-32 (TSSGISGSGSMSPPITS). Polar residues predominate over residues 33-50 (RPASGQASPLTSNGSLSP). Positions 333–356 (GPGGPGGPGGYRGGRGGGRGGSYG) are enriched in gly residues. Residues 379-486 (FTMDTLSRDT…LPMEHCLIDS (108 aa)) enclose the PAZ domain. Positions 660-966 (CIIVVLQSKN…VATRARCHVK (307 aa)) constitute a Piwi domain.

This chain is Putative protein tag-76 (tag-76), found in Caenorhabditis elegans.